Reading from the N-terminus, the 2887-residue chain is MVIFAIFYVGRVLGYIVSKAANLVLWKQYRVTVSIQSLVFSPLAGKVHFKNVSVTSQDQLISVLKGTITWRYWLIGRYRRSGTADGARRCRFALKFEGFEYFVYNRNGVYDRIARELDGEDTSAEPTVSVPSVEEVIAELQDDPLIRRFLPVEFLHNKGAIVLGNKQTHSVAIMNYEKLAGTVSIEVPDDTRAPSSFRTEAKISNCTVAIKPNISYEVDNPVKIYVEPKRTARLWKKYKTLLGTVLEATLHAKRKKEQHQTPKWYDNWRGLSMYDVNLDEELDEEVKFDIEHHEYAKCTTVLKADQMDVTYSYGMPGTARVTDSDNAENPLLERPELDHSVDILVYDANCTYGPWANRQVQQCLRVFSPTVCRNFKLRTPEEIAQQTEPAAFKLSVTIMEDSVLRVPMKESSKDAAFLEKYKQTRDETRPFGWIDIRIAKESNITVRMAAYPTENGFENILHANLVDTTISTSVNHDTLLKAKSHDITVDFSYPYGWQDKAEWNFNVCSTQAELFVLRDHVYLISDLVTDFSGGEEVLYEQFRPFDYRFRWDIRGYSAYLNVNDANIINNPIDFGENCYLSVHGDDAEITFSLPITSIIQKYVTVDFNIFTPHFSLFLNAPPWHTFSELLHYKEIGRSKNFNIKGSYTSYSEVDVDNVDALNIACETDYIVVLCYGVILKCMLNVKVNYFGEMVHFRTTEEYVEELQRRNKQNPSTCRPFNSDGNVHDSDVVATESNEIIDASFDAFGGPPTIKKSALKRSINELDVWFTFISKGGCFFFPENIYKFDACLGFYFDNLEASLRFLNYYVDAAVSLDSIYFKRHTDIDARTLFKVIEDIGIPIDASDAYLSQFSFRLHKMLGIMPSEESYACEFDVRVDTLDVHCDLAVLKAFVNTLRNLAFGFKDVENSLQYEREQVFDLNKISCVIENVTVKLQNVDKDEDIWLSLNLPVTTLTSFDLANERYSRRSDLSIPELLFGIYRGDSESTCLGAFSTGVTVTLFERFEQFARCRVLQRKHILVNDAPFHRCSFMLPPEYKKMPIYRSLYGCIPPSSSLPLFPEPISADNFEVIFEKLLGEIYQEYASDSSYQITDDSISSTEHDYHNQTVNAAIGTSSSLFIRSQNHQQTLSSFIVEFDPIDGYLDLSATEFMLEIYKYLTEVSLDEAIDSLEIGIINQFIQTFGEDNGISEVRVLCPNISLSATNKQSKFSMFKLSSKIKNLDITSRIKSSDPNLKPDPEKTTLCYKIDYIRANIVQDGIVVPPKQPSQLFSCSIELLEGYLSYDKLSLLDNNVQSCSVTLSPGTDKLLFEFLNPFISTFDLLQRELSSFEDTLLASKREFLLNILRGGRDYEIQHDPPVITKPANITRFSNRHIRSAESWRIIMRLRHILNYLPQEWHQSFTRHLGTQDFTSPEEAGKEFLSIFSDWRSWEPTDVQGSFVHEKVFTKKRSRPFAALQGFTFSSDDIRLNMKDDARVPITVKGVTLGIRNNGLAPEQVDGRTEGSMPDPDYISFCTTDEVVMRVDRSFVKTLKEFRDLIHRFKIGGPVGTAKHDNVSLFSNITFQFGKLYVVAKLAGVYLRICLDNLSALMLTSQSSVESKVISSSTLSFDHMQAILGYRSFRFMTIDIDMFSVLLHYLPGQGCYSIDWKARKFHIDSSSATTKDLTESLPYVRDEIKYLVEALVPELFAEPPIERESSGNKIHAVLFQGQVANITLKLQILSPFIILYCAENFELQAESTDSVIFDLNSGESYMEISSAKQKLDYFKYTHTCLKLSGTSSSARLFEHISCDIGILKLSVFDLKTRITDLLQDIKAALFSMKSLSDILNISQSSPTASAFGSWFSILPDNLSLQATYAGLLLGFGHTLYILEFNNFEAKHTRDGLPDAITPRPCFKVDHSIESASFLIKDRRIDDRLAKVVDFAVNFNMVHDTDLCIQSVQIESTHLKITLAPMTVVRLLSLINEFGIIRKQFTEESIYTPSSAHNNSTATECLEPSVWRLIIKSGHILSHDFSIVWLFDIPNSSADGLICGYDRLFSVYEKPYGKLTLLNAYFSAAKILASEADFYSSVVRKQRINTSYLSDMQLRYWFTEDSENTDLFIRIHGAKLAVDISAEIVTLLEETIQSIQTFNNLKKALVDPFRTKKQDSDISKEPYNWNNQLATGVRSLNCIINYAGVTLKLHSHDGRGDASPLELTSPSYKVAIDYKYFPNLEKTHRFRTLITATPTHNTFYSTSAFLIHDLCYRFSKLLKTSSTENKSSSASTSSSIKVEGSDNSTLLGSIDLVIILNVGKQEVTFSCEPKAKVQATVGFEKFDIKIFNNNINDEESLCLAIEIENLMTNSRHIYSREVCASLKLRHISMVFDIMGSQVRRIYGSTLISSPLFYFNMKQLQDLKLFIDQWFPQKTPMNTGSYPEGVLVDDISRSIGSKFYKGSSSSSFTWGYSVIVAGSCAEIELGPSLGVLNVTSEDVWAISKQQVDWSQQLDLNMGKLDVTSSGRLGGNFLVRNAHLSLELKWPNPKDFFQVPLVCVKLGSDTVDTKLSFDYHTFFISSLKQGYASLFNERDEDGSLADLLSVTVSFESVNIFLTALAAANISDIKNSITRLKKDNELSYLSSFLASDQPSDEPEEDGGIFDTLSLLRTQLSLNLGVFRLQISPTSLFDSDVLILTATKMMANTGIQADIKIKTDLHWQLDDVSLALLPFNNSLDESYLATMEVGKYIELSSTIQGGAIFSAPSIVVNMTTWQEPQSNVIELLYSTSFGGTVKIRWNLGPISFIKDMWQAHMNAMQLREGYYHGLAESGVAVTPLNSKAVPLEMHLGSDYQYLPLQEPDIEMPRIKDLGDATPPIEWFGVNRTKFPGFTHQFVIVPLQKLARTAEKEYEKILGRAL.

Residue methionine 1 is a topological domain, cytoplasmic. The helical; Signal-anchor for type II membrane protein transmembrane segment at 2-22 (VIFAIFYVGRVLGYIVSKAAN) threads the bilayer. Residues 23–2887 (LVLWKQYRVT…EYEKILGRAL (2865 aa)) are Extracellular-facing. Residues asparagine 51, asparagine 205, asparagine 213, asparagine 349, asparagine 443, asparagine 929, asparagine 1104, asparagine 1196, asparagine 1364, asparagine 1553, asparagine 1559, asparagine 1584, asparagine 1712, asparagine 1827, asparagine 1848, asparagine 1984, asparagine 1985, asparagine 2021, asparagine 2075, asparagine 2255, asparagine 2273, asparagine 2462, asparagine 2592, asparagine 2702, asparagine 2739, and asparagine 2852 are each glycosylated (N-linked (GlcNAc...) asparagine).

Belongs to the CSF1 family.

It localises to the membrane. Functionally, required for the glucose and other nutrients uptake at low temperature. The chain is Protein CSF1 (CSF1) from Eremothecium gossypii (strain ATCC 10895 / CBS 109.51 / FGSC 9923 / NRRL Y-1056) (Yeast).